Here is a 374-residue protein sequence, read N- to C-terminus: Glutamate 5-kinase (374 aa).

Lysine 13 contributes to the ATP binding site. Substrate contacts are provided by serine 54, aspartate 141, and asparagine 153. Residue 173–174 participates in ATP binding; sequence SD. The 78-residue stretch at 278 to 355 folds into the PUA domain; it reads KGTVHLDSGA…NEIESVLGYP (78 aa).

The protein belongs to the glutamate 5-kinase family.

The protein localises to the cytoplasm. It catalyses the reaction L-glutamate + ATP = L-glutamyl 5-phosphate + ADP. The protein operates within amino-acid biosynthesis; L-proline biosynthesis; L-glutamate 5-semialdehyde from L-glutamate: step 1/2. Its function is as follows. Catalyzes the transfer of a phosphate group to glutamate to form L-glutamate 5-phosphate. The sequence is that of Glutamate 5-kinase from Roseobacter denitrificans (strain ATCC 33942 / OCh 114) (Erythrobacter sp. (strain OCh 114)).